Reading from the N-terminus, the 169-residue chain is Keratin-associated protein 9-7 (169 aa).

17 tandem repeats follow at residues 8–12, 13–17, 32–36, 37–41, 46–50, 51–55, 56–60, 61–65, 75–79, 80–84, 85–89, 90–94, 100–104, 139–143, 144–148, 149–153, and 163–167. A 17 X 5 AA repeats of C-C-[VGSREQH]-[SQTPN]-[STPAI] region spans residues 8–167; sequence CCQPTCCRTT…TCVTSCCQPA (160 aa).

It belongs to the KRTAP type 9 family. As to quaternary structure, interacts with hair keratins.

In terms of biological role, in the hair cortex, hair keratin intermediate filaments are embedded in an interfilamentous matrix, consisting of hair keratin-associated proteins (KRTAP), which are essential for the formation of a rigid and resistant hair shaft through their extensive disulfide bond cross-linking with abundant cysteine residues of hair keratins. The matrix proteins include the high-sulfur and high-glycine-tyrosine keratins. This chain is Keratin-associated protein 9-7, found in Homo sapiens (Human).